We begin with the raw amino-acid sequence, 74 residues long: Apolipoprotein C-I, acidic form (74 aa).

Positions 1–26 are cleaved as a signal peptide; the sequence is MRLFLSLPVLVVVLSMVLEGPTPAQG.

This sequence belongs to the apolipoprotein C1 family.

The protein localises to the secreted. The sequence is that of Apolipoprotein C-I, acidic form (APOC1A) from Colobus guereza (Mantled guereza).